The following is a 179-amino-acid chain: Large ribosomal subunit protein uL5 (179 aa).

The protein belongs to the universal ribosomal protein uL5 family. As to quaternary structure, part of the 50S ribosomal subunit; part of the 5S rRNA/L5/L18/L25 subcomplex. Contacts the 5S rRNA and the P site tRNA. Forms a bridge to the 30S subunit in the 70S ribosome.

Functionally, this is one of the proteins that bind and probably mediate the attachment of the 5S RNA into the large ribosomal subunit, where it forms part of the central protuberance. In the 70S ribosome it contacts protein S13 of the 30S subunit (bridge B1b), connecting the 2 subunits; this bridge is implicated in subunit movement. Contacts the P site tRNA; the 5S rRNA and some of its associated proteins might help stabilize positioning of ribosome-bound tRNAs. The sequence is that of Large ribosomal subunit protein uL5 from Buchnera aphidicola subsp. Schizaphis graminum (strain Sg).